A 61-amino-acid polypeptide reads, in one-letter code: Bacteriocin mesentericin Y105 (61 aa).

An N-terminal signal peptide occupies residues 1–24 (MTNMKSVEAYQQLDNQNLKKVVGG). An intrachain disulfide couples Cys-33 to Cys-38.

The protein belongs to the bacteriocin class IIA/YGNGV family.

The protein resides in the secreted. Its function is as follows. Bacteriocin active against Listeria monocytogenes. The chain is Bacteriocin mesentericin Y105 (mesY) from Leuconostoc mesenteroides.